Here is a 368-residue protein sequence, read N- to C-terminus: F-box protein At3g17710 (368 aa).

The F-box domain occupies 1 to 46 (MASVKLPWDLEEEILSRLPPRSLVRFRTVCKHWNGLFSDKRFVKKH).

The polypeptide is F-box protein At3g17710 (Arabidopsis thaliana (Mouse-ear cress)).